A 553-amino-acid chain; its full sequence is Transcription factor 7-like 1 (553 aa).

Residues 1-11 (MPQLNSGGGDE) are compositionally biased toward gly residues. An interaction with CTNNB1 region spans residues 1–61 (MPQLNSGGGD…SENHSSDSDS (61 aa)). Disordered stretches follow at residues 1–77 (MPQL…EKPR), 183–213 (GTPP…PYYP), and 392–474 (SARD…LTTK). 2 stretches are compositionally biased toward basic and acidic residues: residues 17–32 (ELIR…EKSP) and 52–77 (SENH…EKPR). The interval 109-312 (LGGHYLPNGA…SPNLITKPSV (204 aa)) is interaction with AES and TLE4. The HMG box DNA-binding region spans 324-392 (IKKPLNAFML…LHSQLYPTWS (69 aa)). The segment covering 407–416 (KQSPEMEITK) has biased composition (basic and acidic residues). The interval 408-553 (QSPEMEITKT…PLSLVTKSSD (146 aa)) is interaction with CTBP. Low complexity predominate over residues 444–463 (SPATPSAALASPAAPAATHS). Polar residues predominate over residues 464–473 (EQAQPLSLTT).

Belongs to the TCF/LEF family. Interacts with csnk1e, ctnnb1, ctbp, dact1 and gsk3b. May interact with ase and tle4. In terms of processing, phosphorylated. Phosphorylation by csnk1e promotes binding to ctnnb1 while phosphorylation by gsk3b may reverse this effect.

It is found in the nucleus. Participates in the Wnt signaling pathway. Binds to DNA and acts as a repressor in the absence of ctnnb1, and as an activator in its presence. Required early in development for the establishment of the dorsal body axis in response to maternal Wnt signaling. The sequence is that of Transcription factor 7-like 1 (tcf7l1) from Xenopus tropicalis (Western clawed frog).